A 77-amino-acid polypeptide reads, in one-letter code: NAD(P)H-quinone oxidoreductase subunit L (77 aa).

The next 2 membrane-spanning stretches (helical) occupy residues 12-32 (LIAY…LLFY) and 47-67 (LGIY…SPFL).

The protein belongs to the complex I NdhL subunit family. As to quaternary structure, NDH-1 can be composed of about 15 different subunits; different subcomplexes with different compositions have been identified which probably have different functions.

Its subcellular location is the cellular thylakoid membrane. It catalyses the reaction a plastoquinone + NADH + (n+1) H(+)(in) = a plastoquinol + NAD(+) + n H(+)(out). The catalysed reaction is a plastoquinone + NADPH + (n+1) H(+)(in) = a plastoquinol + NADP(+) + n H(+)(out). Functionally, NDH-1 shuttles electrons from an unknown electron donor, via FMN and iron-sulfur (Fe-S) centers, to quinones in the respiratory and/or the photosynthetic chain. The immediate electron acceptor for the enzyme in this species is believed to be plastoquinone. Couples the redox reaction to proton translocation, and thus conserves the redox energy in a proton gradient. Cyanobacterial NDH-1 also plays a role in inorganic carbon-concentration. This is NAD(P)H-quinone oxidoreductase subunit L from Prochlorococcus marinus (strain MIT 9312).